The primary structure comprises 286 residues: ATP synthase gamma chain (286 aa).

This sequence belongs to the ATPase gamma chain family. As to quaternary structure, F-type ATPases have 2 components, CF(1) - the catalytic core - and CF(0) - the membrane proton channel. CF(1) has five subunits: alpha(3), beta(3), gamma(1), delta(1), epsilon(1). CF(0) has three main subunits: a, b and c.

It is found in the cell membrane. Its function is as follows. Produces ATP from ADP in the presence of a proton gradient across the membrane. The gamma chain is believed to be important in regulating ATPase activity and the flow of protons through the CF(0) complex. This Oceanobacillus iheyensis (strain DSM 14371 / CIP 107618 / JCM 11309 / KCTC 3954 / HTE831) protein is ATP synthase gamma chain.